The chain runs to 115 residues: Aspartate 1-decarboxylase (115 aa).

The active-site Schiff-base intermediate with substrate; via pyruvic acid is S25. Position 25 is a pyruvic acid (Ser) (S25). T57 provides a ligand contact to substrate. Residue Y58 is the Proton donor of the active site. Residue 73–75 (GPA) coordinates substrate.

It belongs to the PanD family. In terms of assembly, heterooctamer of four alpha and four beta subunits. The cofactor is pyruvate. Is synthesized initially as an inactive proenzyme, which is activated by self-cleavage at a specific serine bond to produce a beta-subunit with a hydroxyl group at its C-terminus and an alpha-subunit with a pyruvoyl group at its N-terminus.

The protein resides in the cytoplasm. The catalysed reaction is L-aspartate + H(+) = beta-alanine + CO2. It functions in the pathway cofactor biosynthesis; (R)-pantothenate biosynthesis; beta-alanine from L-aspartate: step 1/1. Its function is as follows. Catalyzes the pyruvoyl-dependent decarboxylation of aspartate to produce beta-alanine. This chain is Aspartate 1-decarboxylase, found in Cytophaga hutchinsonii (strain ATCC 33406 / DSM 1761 / CIP 103989 / NBRC 15051 / NCIMB 9469 / D465).